Here is a 231-residue protein sequence, read N- to C-terminus: Lipoprotein-releasing system ATP-binding protein LolD (231 aa).

In terms of domain architecture, ABC transporter spans 9 to 230 (FSLKDVGKEY…LRAGELYDQN (222 aa)). 45-52 (GASGSGKS) is a binding site for ATP.

It belongs to the ABC transporter superfamily. Lipoprotein translocase (TC 3.A.1.125) family. In terms of assembly, the complex is composed of two ATP-binding proteins (LolD) and two transmembrane proteins (LolC and LolE).

The protein resides in the cell inner membrane. In terms of biological role, part of the ABC transporter complex LolCDE involved in the translocation of mature outer membrane-directed lipoproteins, from the inner membrane to the periplasmic chaperone, LolA. Responsible for the formation of the LolA-lipoprotein complex in an ATP-dependent manner. The sequence is that of Lipoprotein-releasing system ATP-binding protein LolD from Oleidesulfovibrio alaskensis (strain ATCC BAA-1058 / DSM 17464 / G20) (Desulfovibrio alaskensis).